We begin with the raw amino-acid sequence, 68 residues long: Large ribosomal subunit protein uL29 (68 aa).

The protein belongs to the universal ribosomal protein uL29 family.

The sequence is that of Large ribosomal subunit protein uL29 from Nitrobacter winogradskyi (strain ATCC 25391 / DSM 10237 / CIP 104748 / NCIMB 11846 / Nb-255).